Consider the following 495-residue polypeptide: Acetyl-coenzyme A carboxylase carboxyl transferase subunit beta, chloroplastic (495 aa).

Residues 188–208 form a disordered region; the sequence is SRNSSENEGSSRRTRTKGSDL. Residues 226 to 495 enclose the CoA carboxyltransferase N-terminal domain; it reads LWVQCENCYG…PLNQKSSKIK (270 aa). Residues C230, C233, C249, and C252 each contribute to the Zn(2+) site. A C4-type zinc finger spans residues 230 to 252; that stretch reads CENCYGLNYKKFFKSKMNICEQC.

This sequence belongs to the AccD/PCCB family. As to quaternary structure, acetyl-CoA carboxylase is a heterohexamer composed of biotin carboxyl carrier protein, biotin carboxylase and 2 subunits each of ACCase subunit alpha and ACCase plastid-coded subunit beta (accD). Zn(2+) is required as a cofactor.

It is found in the plastid. The protein resides in the chloroplast stroma. It carries out the reaction N(6)-carboxybiotinyl-L-lysyl-[protein] + acetyl-CoA = N(6)-biotinyl-L-lysyl-[protein] + malonyl-CoA. It functions in the pathway lipid metabolism; malonyl-CoA biosynthesis; malonyl-CoA from acetyl-CoA: step 1/1. Its function is as follows. Component of the acetyl coenzyme A carboxylase (ACC) complex. Biotin carboxylase (BC) catalyzes the carboxylation of biotin on its carrier protein (BCCP) and then the CO(2) group is transferred by the transcarboxylase to acetyl-CoA to form malonyl-CoA. The polypeptide is Acetyl-coenzyme A carboxylase carboxyl transferase subunit beta, chloroplastic (Nicotiana tomentosiformis (Tobacco)).